An 861-amino-acid polypeptide reads, in one-letter code: Ribosome biogenesis protein BOP1 homolog (861 aa).

Residues 1 to 237 (MVANKSKATK…GDTSDEEDIR (237 aa)) form a disordered region. The span at 29-45 (NGRSTKQPEADSDQSAS) shows a compositional bias: polar residues. Composition is skewed to acidic residues over residues 62-77 (DDGDSSDSEGEGDASD) and 87-143 (SDSD…EDLA). 3 stretches are compositionally biased toward basic and acidic residues: residues 144–156 (EPEKPRAIKEGSK), 174–190 (ETKKLLEAAAKEDEKLA), and 212–223 (PERKTGRLKNSD). 6 WD repeats span residues 522 to 561 (GHTDMIRTISIEPKGEYLVTGSDDKTIKIWEVSTARCIKT), 563 to 603 (PTGD…CLLS), 692 to 730 (KSKGLIQCVLFHPVKPCLFVATQRHIRVYDLVKQELLKK), 733 to 772 (PSCKWISSMAIHPKGDNLLVATYEKKMMWFDLDLSTRPYQ), 776 to 815 (LHFSAIRNVAFHQRYPLFASASDDRSVIVSHGMVYNDLMQ), and 831 to 861 (VNDFGAFDVVFHPTQPWLFSSGADNTVRLYT).

It belongs to the WD repeat BOP1/ERB1 family.

It localises to the nucleus. The protein resides in the nucleolus. Its subcellular location is the nucleoplasm. Its function is as follows. Required for maturation of ribosomal RNAs and formation of the large ribosomal subunit. This chain is Ribosome biogenesis protein BOP1 homolog, found in Culex quinquefasciatus (Southern house mosquito).